The following is a 157-amino-acid chain: uncharacterized protein (157 aa).

Basic and acidic residues predominate over residues 1–11 (MGDLEGQDRPD). The disordered stretch occupies residues 1-22 (MGDLEGQDRPDPISTMVGPSGT).

The protein localises to the mitochondrion. This is an uncharacterized protein from Arabidopsis thaliana (Mouse-ear cress).